Here is a 761-residue protein sequence, read N- to C-terminus: Xaa-Pro dipeptidyl-peptidase (761 aa).

Residues S349, D469, and H499 each act as charge relay system in the active site.

The protein belongs to the peptidase S15 family. In terms of assembly, homodimer.

The protein resides in the cytoplasm. It carries out the reaction Hydrolyzes Xaa-Pro-|- bonds to release unblocked, N-terminal dipeptides from substrates including Ala-Pro-|-p-nitroanilide and (sequentially) Tyr-Pro-|-Phe-Pro-|-Gly-Pro-|-Ile.. Removes N-terminal dipeptides sequentially from polypeptides having unsubstituted N-termini provided that the penultimate residue is proline. The chain is Xaa-Pro dipeptidyl-peptidase from Streptococcus equi subsp. equi (strain 4047).